We begin with the raw amino-acid sequence, 373 residues long: Putative F-box protein At1g76830 (373 aa).

The 46-residue stretch at 4-49 folds into the F-box domain; sequence ITSFENLPEELKREILLRMSPNSLVTCSRVSKKLASMIRTKSFKEL.

This is Putative F-box protein At1g76830 from Arabidopsis thaliana (Mouse-ear cress).